We begin with the raw amino-acid sequence, 406 residues long: Protein ALP1-like (406 aa).

Positions 8–15 (KKKKRAEK) match the Nuclear localization signal motif. Residues 187–353 (IDITHIVMNL…IIFVCCLLHN (167 aa)) enclose the DDE Tnp4 domain. Residues Asp-188, Asp-240, and Asp-279 each contribute to the a divalent metal cation site.

This sequence belongs to the HARBI1 family. A divalent metal cation serves as cofactor.

Its subcellular location is the nucleus. Transposase-derived protein that may have nuclease activity. This Arabidopsis thaliana (Mouse-ear cress) protein is Protein ALP1-like.